The primary structure comprises 181 residues: MKQLLDFLPLVIFFAVYKFFDIYIASGALIAATALQLIISYMLYKKLEKMHLITFAMVSVFGSLTLILHDDSFIKWKVTIVYALFAIALAVSQFMNKPILKSMLGKELVVEDKIWAHVTWYWVLFFVVCGLVNIYVAFSLSQETWVNFKVFGLTALTLINTVLTVFYLFKNMSEEDKKELK.

Transmembrane regions (helical) follow at residues 10–30 (LVIFFAVYKFFDIYIASGALI), 50–70 (MHLITFAMVSVFGSLTLILHD), 80–100 (IVYALFAIALAVSQFMNKPIL), 118–138 (VTWYWVLFFVVCGLVNIYVAF), and 148–168 (FKVFGLTALTLINTVLTVFYL).

The protein belongs to the YciB family.

The protein localises to the cell inner membrane. Functionally, plays a role in cell envelope biogenesis, maintenance of cell envelope integrity and membrane homeostasis. In Shewanella piezotolerans (strain WP3 / JCM 13877), this protein is Inner membrane-spanning protein YciB.